The following is a 227-amino-acid chain: Transcriptional regulatory protein CusR (227 aa).

A Response regulatory domain is found at 2-116 (KLLIVEDEKK…ELLARVRTLL (115 aa)). D51 bears the 4-aspartylphosphate mark. The segment at residues 125-223 (ESQFQVADLM…VRGVGYMLEV (99 aa)) is a DNA-binding region (ompR/PhoB-type).

Post-translationally, phosphorylated by CusS.

It localises to the cytoplasm. Its function is as follows. Member of the two-component regulatory system CusS/CusR involved in response to copper and silver. The chain is Transcriptional regulatory protein CusR (cusR) from Escherichia coli O6:H1 (strain CFT073 / ATCC 700928 / UPEC).